A 232-amino-acid polypeptide reads, in one-letter code: Vesicle transport through interaction with t-SNAREs homolog 1B (232 aa).

An N-acetylalanine modification is found at Ala-2. Interaction with CLINT1 stretches follow at residues 2–23 (AASA…GLLE) and 69–73 (APLTF). Topologically, residues 2-208 (AASAASSEHF…SRKVITNKLL (207 aa)) are cytoplasmic. Residues 36–98 (AGTEEKKKLV…AKLHREVRST (63 aa)) adopt a coiled-coil conformation. Arg-107 bears the Omega-N-methylarginine mark. At Ser-138 the chain carries Phosphoserine. Residues 160 to 201 (GTEIIEELGEQRDQLERTKSRLVNTNENLSKSRKILRSMSRK) are a coiled coil. Residues 209–229 (LSVIILLELAILVGLVYYKFF) form a helical; Anchor for type IV membrane protein membrane-spanning segment. At 230–232 (RHH) the chain is on the vesicular side.

This sequence belongs to the VTI1 family. As to quaternary structure, forms a SNARE complex with STX7, STX8 and VAMP8 which functions in the homotypic fusion of late endosomes. Component of the SNARE complex composed of STX7, STX8, VAMP7 and VIT1B that is required for heterotypic fusion of late endosomes with lysosomes. May interact with STX17. Interacts with CLINT1. In terms of tissue distribution, broadly expressed.

It is found in the early endosome membrane. The protein localises to the late endosome membrane. Its subcellular location is the lysosome membrane. It localises to the cytoplasmic granule. The protein resides in the recycling endosome membrane. In terms of biological role, V-SNARE that mediates vesicle transport pathways through interactions with t-SNAREs on the target membrane. These interactions are proposed to mediate aspects of the specificity of vesicle trafficking and to promote fusion of the lipid bilayers. This is Vesicle transport through interaction with t-SNAREs homolog 1B (Vti1b) from Mus musculus (Mouse).